Reading from the N-terminus, the 411-residue chain is 2,3-bisphosphoglycerate-independent phosphoglycerate mutase (411 aa).

It belongs to the BPG-independent phosphoglycerate mutase family. A-PGAM subfamily.

The enzyme catalyses (2R)-2-phosphoglycerate = (2R)-3-phosphoglycerate. It participates in carbohydrate degradation; glycolysis; pyruvate from D-glyceraldehyde 3-phosphate: step 3/5. In terms of biological role, catalyzes the interconversion of 2-phosphoglycerate and 3-phosphoglycerate. The protein is 2,3-bisphosphoglycerate-independent phosphoglycerate mutase of Pyrobaculum neutrophilum (strain DSM 2338 / JCM 9278 / NBRC 100436 / V24Sta) (Thermoproteus neutrophilus).